A 105-amino-acid chain; its full sequence is U-scoloptoxin(05)-Sa2a (105 aa).

Residues 1-24 (MKEAVKMSCLCIFLFLFLFSLTDA) form the signal peptide. Residues 79-105 (HVPESNQKDGKVSTHMSSCNTDGCNAN) are disordered. The span at 92–105 (THMSSCNTDGCNAN) shows a compositional bias: polar residues.

It belongs to the scoloptoxin-05 family. Post-translationally, contains 4 disulfide bonds. As to expression, expressed by the venom gland.

The protein resides in the secreted. The protein is U-scoloptoxin(05)-Sa2a of Scolopendra alternans (Florida Keys giant centipede).